The sequence spans 880 residues: Valine--tRNA ligase (880 aa).

The short motif at 46–56 is the 'HIGH' region element; it reads PNVTGKLHLGH. The 'KMSKS' region signature appears at 520–524; the sequence is KMSKS. K523 is an ATP binding site. Residues 808–880 adopt a coiled-coil conformation; sequence LAGLINIEEE…KARIAELKEN (73 aa).

Belongs to the class-I aminoacyl-tRNA synthetase family. ValS type 1 subfamily. In terms of assembly, monomer.

Its subcellular location is the cytoplasm. The catalysed reaction is tRNA(Val) + L-valine + ATP = L-valyl-tRNA(Val) + AMP + diphosphate. In terms of biological role, catalyzes the attachment of valine to tRNA(Val). As ValRS can inadvertently accommodate and process structurally similar amino acids such as threonine, to avoid such errors, it has a 'posttransfer' editing activity that hydrolyzes mischarged Thr-tRNA(Val) in a tRNA-dependent manner. The polypeptide is Valine--tRNA ligase (Lactococcus lactis subsp. lactis (strain IL1403) (Streptococcus lactis)).